Here is a 748-residue protein sequence, read N- to C-terminus: Acetyl-CoA decarbonylase/synthase complex subunit beta 1 (748 aa).

4 residues coordinate [Ni-Fe-S] cluster: Cys480, Cys483, Cys569, and Cys571.

It belongs to the CdhC family. Monomer. The ACDS complex is made up of alpha, epsilon, beta, gamma and delta chains with a probable stoichiometry of (alpha(2)epsilon(2))(4)-beta(8)-(gamma(1)delta(1))(8) (Potential). [Ni-Fe-S] cluster is required as a cofactor.

The enzyme catalyses Co(I)-[corrinoid Fe-S protein] + acetyl-CoA + H(+) = methyl-Co(III)-[corrinoid Fe-S protein] + CO + CoA. Its function is as follows. Part of a complex that catalyzes the reversible cleavage of acetyl-CoA, allowing autotrophic growth from CO(2). The alpha-epsilon complex generates CO from CO(2), while the beta subunit (this protein) combines the CO with CoA and a methyl group to form acetyl-CoA. The methyl group, which is incorporated into acetyl-CoA, is transferred to the beta subunit by a corrinoid iron-sulfur protein (the gamma-delta complex). The polypeptide is Acetyl-CoA decarbonylase/synthase complex subunit beta 1 (cdhC1) (Methanocaldococcus jannaschii (strain ATCC 43067 / DSM 2661 / JAL-1 / JCM 10045 / NBRC 100440) (Methanococcus jannaschii)).